The primary structure comprises 445 residues: Probable glycine dehydrogenase (decarboxylating) subunit 1 (445 aa).

The protein belongs to the GcvP family. N-terminal subunit subfamily. The glycine cleavage system is composed of four proteins: P, T, L and H. In this organism, the P 'protein' is a heterodimer of two subunits.

The catalysed reaction is N(6)-[(R)-lipoyl]-L-lysyl-[glycine-cleavage complex H protein] + glycine + H(+) = N(6)-[(R)-S(8)-aminomethyldihydrolipoyl]-L-lysyl-[glycine-cleavage complex H protein] + CO2. Its function is as follows. The glycine cleavage system catalyzes the degradation of glycine. The P protein binds the alpha-amino group of glycine through its pyridoxal phosphate cofactor; CO(2) is released and the remaining methylamine moiety is then transferred to the lipoamide cofactor of the H protein. This chain is Probable glycine dehydrogenase (decarboxylating) subunit 1, found in Anaeromyxobacter dehalogenans (strain 2CP-C).